The chain runs to 175 residues: Interferon gamma (175 aa).

Positions 1-23 (MNATCCILALLLCLTQAISGCYC) are cleaved as a signal peptide. Pyrrolidone carboxylic acid is present on Gln24. N-linked (GlcNAc...) asparagine glycans are attached at residues Asn39 and Asn106.

Belongs to the type II (or gamma) interferon family. In terms of assembly, homodimer. Interacts with IFNGR1 (via extracellular domain); this interaction promotes IFNGR1 dimerization. Released primarily from activated T lymphocytes.

The protein localises to the secreted. Its function is as follows. Type II interferon produced by immune cells such as T-cells and NK cells that plays crucial roles in antimicrobial, antiviral, and antitumor responses by activating effector immune cells and enhancing antigen presentation. Primarily signals through the JAK-STAT pathway after interaction with its receptor IFNGR1 to affect gene regulation. Upon IFNG binding, IFNGR1 intracellular domain opens out to allow association of downstream signaling components JAK2, JAK1 and STAT1, leading to STAT1 activation, nuclear translocation and transcription of IFNG-regulated genes. Many of the induced genes are transcription factors such as IRF1 that are able to further drive regulation of a next wave of transcription. Plays a role in class I antigen presentation pathway by inducing a replacement of catalytic proteasome subunits with immunoproteasome subunits. In turn, increases the quantity, quality, and repertoire of peptides for class I MHC loading. Increases the efficiency of peptide generation also by inducing the expression of activator PA28 that associates with the proteasome and alters its proteolytic cleavage preference. Up-regulates as well MHC II complexes on the cell surface by promoting expression of several key molecules such as cathepsins B/CTSB, H/CTSH, and L/CTSL. Participates in the regulation of hematopoietic stem cells during development and under homeostatic conditions by affecting their development, quiescence, and differentiation. This chain is Interferon gamma (IFNG), found in Peromyscus maniculatus (North American deer mouse).